Consider the following 486-residue polypeptide: Cysteine--tRNA ligase (486 aa).

Cys-29 lines the Zn(2+) pocket. The short motif at 31–41 (VTVYDYCHLGH) is the 'HIGH' region element. The Zn(2+) site is built by Cys-214, His-239, and Glu-243. The short motif at 271–275 (KMSKS) is the 'KMSKS' region element. Lys-274 contributes to the ATP binding site.

It belongs to the class-I aminoacyl-tRNA synthetase family. As to quaternary structure, monomer. Zn(2+) is required as a cofactor.

It localises to the cytoplasm. It carries out the reaction tRNA(Cys) + L-cysteine + ATP = L-cysteinyl-tRNA(Cys) + AMP + diphosphate. In Nostoc sp. (strain PCC 7120 / SAG 25.82 / UTEX 2576), this protein is Cysteine--tRNA ligase.